The primary structure comprises 249 residues: Small ribosomal subunit protein uS2 (249 aa).

Belongs to the universal ribosomal protein uS2 family.

The polypeptide is Small ribosomal subunit protein uS2 (Acinetobacter baylyi (strain ATCC 33305 / BD413 / ADP1)).